Consider the following 442-residue polypeptide: 3-phosphoshikimate 1-carboxyvinyltransferase (442 aa).

3 residues coordinate 3-phosphoshikimate: lysine 23, serine 24, and arginine 28. Lysine 23 serves as a coordination point for phosphoenolpyruvate. Phosphoenolpyruvate is bound by residues glycine 95 and arginine 123. 4 residues coordinate 3-phosphoshikimate: serine 167, glutamine 169, aspartate 315, and lysine 342. Position 169 (glutamine 169) interacts with phosphoenolpyruvate. The active-site Proton acceptor is aspartate 315. Residues arginine 346 and arginine 390 each coordinate phosphoenolpyruvate.

This sequence belongs to the EPSP synthase family. In terms of assembly, monomer.

The protein resides in the cytoplasm. The enzyme catalyses 3-phosphoshikimate + phosphoenolpyruvate = 5-O-(1-carboxyvinyl)-3-phosphoshikimate + phosphate. The protein operates within metabolic intermediate biosynthesis; chorismate biosynthesis; chorismate from D-erythrose 4-phosphate and phosphoenolpyruvate: step 6/7. In terms of biological role, catalyzes the transfer of the enolpyruvyl moiety of phosphoenolpyruvate (PEP) to the 5-hydroxyl of shikimate-3-phosphate (S3P) to produce enolpyruvyl shikimate-3-phosphate and inorganic phosphate. This Dichelobacter nodosus (strain VCS1703A) protein is 3-phosphoshikimate 1-carboxyvinyltransferase.